The sequence spans 321 residues: Ribosomal RNA small subunit methyltransferase H (321 aa).

Residues 42 to 44, Asp62, Phe86, Asp107, and Gln114 each bind S-adenosyl-L-methionine; that span reads GGH.

This sequence belongs to the methyltransferase superfamily. RsmH family.

Its subcellular location is the cytoplasm. It catalyses the reaction cytidine(1402) in 16S rRNA + S-adenosyl-L-methionine = N(4)-methylcytidine(1402) in 16S rRNA + S-adenosyl-L-homocysteine + H(+). Functionally, specifically methylates the N4 position of cytidine in position 1402 (C1402) of 16S rRNA. The protein is Ribosomal RNA small subunit methyltransferase H of Herminiimonas arsenicoxydans.